Here is a 245-residue protein sequence, read N- to C-terminus: Biosynthetic peptidoglycan transglycosylase (245 aa).

Residues 20 to 42 (VYAGSVFAGAWLATQLFYLVQIA) traverse the membrane as a helical segment.

The protein belongs to the glycosyltransferase 51 family.

It localises to the cell inner membrane. It catalyses the reaction [GlcNAc-(1-&gt;4)-Mur2Ac(oyl-L-Ala-gamma-D-Glu-L-Lys-D-Ala-D-Ala)](n)-di-trans,octa-cis-undecaprenyl diphosphate + beta-D-GlcNAc-(1-&gt;4)-Mur2Ac(oyl-L-Ala-gamma-D-Glu-L-Lys-D-Ala-D-Ala)-di-trans,octa-cis-undecaprenyl diphosphate = [GlcNAc-(1-&gt;4)-Mur2Ac(oyl-L-Ala-gamma-D-Glu-L-Lys-D-Ala-D-Ala)](n+1)-di-trans,octa-cis-undecaprenyl diphosphate + di-trans,octa-cis-undecaprenyl diphosphate + H(+). It functions in the pathway cell wall biogenesis; peptidoglycan biosynthesis. Its function is as follows. Peptidoglycan polymerase that catalyzes glycan chain elongation from lipid-linked precursors. This is Biosynthetic peptidoglycan transglycosylase from Burkholderia ambifaria (strain ATCC BAA-244 / DSM 16087 / CCUG 44356 / LMG 19182 / AMMD) (Burkholderia cepacia (strain AMMD)).